We begin with the raw amino-acid sequence, 167 residues long: Endoribonuclease YbeY (167 aa).

3 residues coordinate Zn(2+): His-131, His-135, and His-141.

It belongs to the endoribonuclease YbeY family. Requires Zn(2+) as cofactor.

It is found in the cytoplasm. Its function is as follows. Single strand-specific metallo-endoribonuclease involved in late-stage 70S ribosome quality control and in maturation of the 3' terminus of the 16S rRNA. The protein is Endoribonuclease YbeY of Rickettsia felis (strain ATCC VR-1525 / URRWXCal2) (Rickettsia azadi).